The primary structure comprises 620 residues: Long-chain fatty acid transport protein 2 (620 aa).

At 1 to 4 (MLPV) the chain is on the lumenal side. The helical transmembrane segment at 5 to 27 (LYTGLAGLLLLPLLLTCCCPYLL) threads the bilayer. Residues 28 to 106 (QDVRFFLQLA…DHLGLRQGDC (79 aa)) are Cytoplasmic-facing. A helical transmembrane segment spans residues 107 to 127 (VALFMGNEPAYVWLWLGLLKL). Over 128-267 (GCPMACLNYN…DVIYTTMPLY (140 aa)) the chain is Lumenal. Residue 222–233 (YIYTSGTTGLPK) coordinates AMP. The helical transmembrane segment at 268–288 (HSAALMIGLHGCIVVGATFAL) threads the bilayer. Residues 289–620 (RSKFSASQFW…NAIIDKTLKL (332 aa)) are Cytoplasmic-facing. K291 carries the post-translational modification N6-acetyllysine. T577 is modified (phosphothreonine).

The protein belongs to the ATP-dependent AMP-binding enzyme family. Liver and kidney (at protein level).

Its subcellular location is the endoplasmic reticulum membrane. It localises to the peroxisome membrane. The protein resides in the cell membrane. It is found in the microsome. The enzyme catalyses a fatty acid(in) = a fatty acid(out). It catalyses the reaction (9Z)-octadecenoate(out) = (9Z)-octadecenoate(in). The catalysed reaction is a long-chain fatty acid + ATP + CoA = a long-chain fatty acyl-CoA + AMP + diphosphate. It carries out the reaction (5Z,8Z,11Z,14Z)-eicosatetraenoate + ATP + CoA = (5Z,8Z,11Z,14Z)-eicosatetraenoyl-CoA + AMP + diphosphate. The enzyme catalyses (9Z,12Z,15Z)-octadecatrienoate + ATP + CoA = (9Z,12Z,15Z)-octadecatrienoyl-CoA + AMP + diphosphate. It catalyses the reaction hexadecanoate + ATP + CoA = hexadecanoyl-CoA + AMP + diphosphate. The catalysed reaction is (9Z)-octadecenoate + ATP + CoA = (9Z)-octadecenoyl-CoA + AMP + diphosphate. It carries out the reaction 2,6,10,14-tetramethylpentadecanoate + ATP + CoA = pristanoyl-CoA + AMP + diphosphate. The enzyme catalyses (E)-hexadec-2-enoate + ATP + CoA = (2E)-hexadecenoyl-CoA + AMP + diphosphate. It catalyses the reaction 3,7,11,15-tetramethylhexadecanoate + ATP + CoA = phytanoyl-CoA + AMP + diphosphate. The catalysed reaction is a very long-chain fatty acid + ATP + CoA = a very long-chain fatty acyl-CoA + AMP + diphosphate. It carries out the reaction tetracosanoate + ATP + CoA = tetracosanoyl-CoA + AMP + diphosphate. The enzyme catalyses (4Z,7Z,10Z,13Z,16Z,19Z)-docosahexaenoate + ATP + CoA = (4Z,7Z,10Z,13Z,16Z,19Z)-docosahexaenoyl-CoA + AMP + diphosphate. It catalyses the reaction (25R)-3alpha,7alpha,12alpha-trihydroxy-5beta-cholestan-26-oate + ATP + CoA = (25R)-3alpha,7alpha,12alpha-trihydroxy-5beta-cholestan-26-oyl-CoA + AMP + diphosphate. Its function is as follows. Mediates the import of long-chain fatty acids (LCFA) into the cell by facilitating their transport across cell membranes, playing an important role in hepatic fatty acid uptake. Also functions as an acyl-CoA ligase catalyzing the ATP-dependent formation of fatty acyl-CoA using LCFA and very-long-chain fatty acids (VLCFA) as substrates, which prevents fatty acid efflux from cells and might drive more fatty acid uptake. Plays a pivotal role in regulating available LCFA substrates from exogenous sources in tissues undergoing high levels of beta-oxidation or triglyceride synthesis. Can also activate branched-chain fatty acids such as phytanic acid and pristanic acid. May contribute to the synthesis of sphingosine-1-phosphate. Does not activate C24 bile acids, cholate and chenodeoxycholate. In vitro, activates 3-alpha,7-alpha,12-alpha-trihydroxy-5-beta-cholestanate (THCA), the C27 precursor of cholic acid deriving from the de novo synthesis from cholesterol. However, it is not critical for THCA activation and bile synthesis in vivo. This Rattus norvegicus (Rat) protein is Long-chain fatty acid transport protein 2 (Slc27a2).